Consider the following 219-residue polypeptide: MKQEKAIVVFSGGQDSTTCLFWAKERFAEIEAVTFNYGQRHRLEIECAEQIAEELGIKHHILDMTLLNQLAPNALTRQDIKVEDGQNGELPSTFVPGRNLLFLSFAGVLASQIGAKHIVTGVCETDFSGYPDCRDVFIKSLNVTLNLSMDNSFVIDTPLMWLNKAQTWELADQFGALEFVRERTLTCYNGVIADGCGECPACKLRKKGLDEYLSYRKEF.

Phe-10–Leu-20 serves as a coordination point for ATP. Zn(2+)-binding residues include Cys-187, Cys-196, Cys-199, and Cys-202.

The protein belongs to the QueC family. As to quaternary structure, homodimer. It depends on Zn(2+) as a cofactor.

It carries out the reaction 7-carboxy-7-deazaguanine + NH4(+) + ATP = 7-cyano-7-deazaguanine + ADP + phosphate + H2O + H(+). The protein operates within purine metabolism; 7-cyano-7-deazaguanine biosynthesis. Functionally, catalyzes the ATP-dependent conversion of 7-carboxy-7-deazaguanine (CDG) to 7-cyano-7-deazaguanine (preQ(0)). In Lysinibacillus sphaericus (strain C3-41), this protein is 7-cyano-7-deazaguanine synthase.